Consider the following 353-residue polypeptide: Photosystem II protein D1 (353 aa).

Residue Thr-2 is modified to N-acetylthreonine. Thr-2 is modified (phosphothreonine). The next 3 membrane-spanning stretches (helical) occupy residues 29 to 46 (YIGW…TATS), 118 to 133 (HFLL…EWEL), and 142 to 156 (WIAV…AATA). Chlorophyll a is bound at residue His-118. A pheophytin a-binding site is contributed by Tyr-126. Residues Asp-170 and Glu-189 each coordinate [CaMn4O5] cluster. The helical transmembrane segment at 197–218 (FHMLGVAGVFGGSLFSAMHGSL) threads the bilayer. His-198 lines the chlorophyll a pocket. A quinone-binding positions include His-215 and 264–265 (SF). Residue His-215 participates in Fe cation binding. His-272 is a Fe cation binding site. A helical membrane pass occupies residues 274–288 (FLAAWPVVGIWFTAL). Residues His-332, Glu-333, Asp-342, and Ala-344 each coordinate [CaMn4O5] cluster. Residues 345 to 353 (AIDAPSING) constitute a propeptide that is removed on maturation.

The protein belongs to the reaction center PufL/M/PsbA/D family. PSII is composed of 1 copy each of membrane proteins PsbA, PsbB, PsbC, PsbD, PsbE, PsbF, PsbH, PsbI, PsbJ, PsbK, PsbL, PsbM, PsbT, PsbX, PsbY, PsbZ, Psb30/Ycf12, at least 3 peripheral proteins of the oxygen-evolving complex and a large number of cofactors. It forms dimeric complexes. It depends on The D1/D2 heterodimer binds P680, chlorophylls that are the primary electron donor of PSII, and subsequent electron acceptors. It shares a non-heme iron and each subunit binds pheophytin, quinone, additional chlorophylls, carotenoids and lipids. D1 provides most of the ligands for the Mn4-Ca-O5 cluster of the oxygen-evolving complex (OEC). There is also a Cl(-1) ion associated with D1 and D2, which is required for oxygen evolution. The PSII complex binds additional chlorophylls, carotenoids and specific lipids. as a cofactor. In terms of processing, tyr-161 forms a radical intermediate that is referred to as redox-active TyrZ, YZ or Y-Z. Post-translationally, C-terminally processed by CTPA; processing is essential to allow assembly of the oxygen-evolving complex and thus photosynthetic growth.

It localises to the plastid. The protein resides in the chloroplast thylakoid membrane. It carries out the reaction 2 a plastoquinone + 4 hnu + 2 H2O = 2 a plastoquinol + O2. Functionally, photosystem II (PSII) is a light-driven water:plastoquinone oxidoreductase that uses light energy to abstract electrons from H(2)O, generating O(2) and a proton gradient subsequently used for ATP formation. It consists of a core antenna complex that captures photons, and an electron transfer chain that converts photonic excitation into a charge separation. The D1/D2 (PsbA/PsbD) reaction center heterodimer binds P680, the primary electron donor of PSII as well as several subsequent electron acceptors. The chain is Photosystem II protein D1 from Glycine max (Soybean).